A 607-amino-acid polypeptide reads, in one-letter code: Protein aurora borealis (607 aa).

Disordered regions lie at residues 362–381 (PHSDDKENSPPSSIKSPEGD) and 584–607 (LNKNGGVQSPPRTLNPKSLSHFLQ).

This sequence belongs to the BORA family.

Required for the activation of aurka at the onset of mitosis. In Xenopus laevis (African clawed frog), this protein is Protein aurora borealis (bora).